Consider the following 192-residue polypeptide: MADTLGKSELEVIKPQKREIRKGQVRKHIITVKVRNEMGVLARIATLIAGKGYNIEGLSVGETHEKGISRMTIEVIGDDIVIEQVVKQLRRLIDTLKVSDLTDVPHVERELALIKVYTPSSRARDEVLRITEIFRGKVVDVSPDTYTIEVTGDEDKINAMIELLKPFGIKEMARTGKVAMRREMSIKEEENE.

Positions 29–103 (IITVKVRNEM…DTLKVSDLTD (75 aa)) constitute an ACT domain.

The protein belongs to the acetolactate synthase small subunit family. As to quaternary structure, dimer of large and small chains.

The catalysed reaction is 2 pyruvate + H(+) = (2S)-2-acetolactate + CO2. The protein operates within amino-acid biosynthesis; L-isoleucine biosynthesis; L-isoleucine from 2-oxobutanoate: step 1/4. Its pathway is amino-acid biosynthesis; L-valine biosynthesis; L-valine from pyruvate: step 1/4. This is Acetolactate synthase small subunit (ilvH) from Aquifex aeolicus (strain VF5).